An 81-amino-acid polypeptide reads, in one-letter code: RNA-binding protein Hfq (81 aa).

Residues Asp10–Val70 enclose the Sm domain.

Belongs to the Hfq family. As to quaternary structure, homohexamer.

In terms of biological role, RNA chaperone that binds small regulatory RNA (sRNAs) and mRNAs to facilitate mRNA translational regulation in response to envelope stress, environmental stress and changes in metabolite concentrations. Also binds with high specificity to tRNAs. The protein is RNA-binding protein Hfq of Mesorhizobium japonicum (strain LMG 29417 / CECT 9101 / MAFF 303099) (Mesorhizobium loti (strain MAFF 303099)).